Reading from the N-terminus, the 431-residue chain is Enolase (431 aa).

Q167 serves as a coordination point for (2R)-2-phosphoglycerate. E209 serves as the catalytic Proton donor. 3 residues coordinate Mg(2+): D246, E289, and D316. (2R)-2-phosphoglycerate is bound by residues K341, R370, S371, and K392. Catalysis depends on K341, which acts as the Proton acceptor.

It belongs to the enolase family. In terms of assembly, component of the RNA degradosome, a multiprotein complex involved in RNA processing and mRNA degradation. Requires Mg(2+) as cofactor.

Its subcellular location is the cytoplasm. The protein resides in the secreted. It is found in the cell surface. The enzyme catalyses (2R)-2-phosphoglycerate = phosphoenolpyruvate + H2O. Its pathway is carbohydrate degradation; glycolysis; pyruvate from D-glyceraldehyde 3-phosphate: step 4/5. In terms of biological role, catalyzes the reversible conversion of 2-phosphoglycerate (2-PG) into phosphoenolpyruvate (PEP). It is essential for the degradation of carbohydrates via glycolysis. This is Enolase from Shewanella denitrificans (strain OS217 / ATCC BAA-1090 / DSM 15013).